The following is a 597-amino-acid chain: Elongation factor 4 (597 aa).

One can recognise a tr-type G domain in the interval asparagine 2–lysine 184. GTP is bound by residues aspartate 14 to threonine 19 and asparagine 131 to aspartate 134.

It belongs to the TRAFAC class translation factor GTPase superfamily. Classic translation factor GTPase family. LepA subfamily.

Its subcellular location is the cell inner membrane. It carries out the reaction GTP + H2O = GDP + phosphate + H(+). In terms of biological role, required for accurate and efficient protein synthesis under certain stress conditions. May act as a fidelity factor of the translation reaction, by catalyzing a one-codon backward translocation of tRNAs on improperly translocated ribosomes. Back-translocation proceeds from a post-translocation (POST) complex to a pre-translocation (PRE) complex, thus giving elongation factor G a second chance to translocate the tRNAs correctly. Binds to ribosomes in a GTP-dependent manner. The polypeptide is Elongation factor 4 (Janthinobacterium sp. (strain Marseille) (Minibacterium massiliensis)).